A 185-amino-acid polypeptide reads, in one-letter code: Capsid protein (185 aa).

The disordered stretch occupies residues 136 to 185 (NAPILSTLPETTVVRRRDRGRSPRRRTPSPRRRRSQSPRRRRSQSRESQC). The segment covering 149-178 (VRRRDRGRSPRRRTPSPRRRRSQSPRRRRS) has biased composition (basic residues). Phosphoserine; by host is present on residues Ser157, Ser164, and Ser172. The stretch at 157-163 (SPRRRTP) is one 1; half-length repeat. Residues 157 to 179 (SPRRRTPSPRRRRSQSPRRRRSQ) form a 3 X 8 AA repeats of S-P-R-R-R-[PR]-S-Q region. The short motif at 160–177 (RRTPSPRRRRSQSPRRRR) is the Bipartite nuclear localization signal element. Tandem repeats lie at residues 164–171 (SPRRRRSQ) and 172–179 (SPRRRRSQ). The tract at residues 179 to 185 (QSRESQC) is RNA binding.

It belongs to the orthohepadnavirus core antigen family. Homodimerizes, then multimerizes. Interacts with cytosol exposed regions of viral L glycoprotein present in the reticulum-to-Golgi compartment. Interacts with human FLNB. Phosphorylated form interacts with host importin alpha; this interaction depends on the exposure of the NLS, which itself depends upon genome maturation and/or phosphorylation of the capsid protein. Interacts with host NUP153. In terms of processing, phosphorylated by host SRPK1, SRPK2, and maybe protein kinase C or GAPDH. Phosphorylation is critical for pregenomic RNA packaging. Protein kinase C phosphorylation is stimulated by HBx protein and may play a role in transport of the viral genome to the nucleus at the late step during the viral replication cycle.

It is found in the virion. The protein localises to the host cytoplasm. Its function is as follows. Self assembles to form an icosahedral capsid. Most capsids appear to be large particles with an icosahedral symmetry of T=4 and consist of 240 copies of capsid protein, though a fraction forms smaller T=3 particles consisting of 180 capsid proteins. Entering capsids are transported along microtubules to the nucleus. Phosphorylation of the capsid is thought to induce exposure of nuclear localization signal in the C-terminal portion of the capsid protein that allows binding to the nuclear pore complex via the importin (karyopherin-) alpha and beta. Capsids are imported in intact form through the nuclear pore into the nuclear basket, where it probably binds NUP153. Only capsids that contain the mature viral genome can release the viral DNA and capsid protein into the nucleoplasm. Immature capsids get stuck in the basket. Capsids encapsulate the pre-genomic RNA and the P protein. Pre-genomic RNA is reverse-transcribed into DNA while the capsid is still in the cytoplasm. The capsid can then either be directed to the nucleus, providing more genomes for transcription, or bud through the endoplasmic reticulum to provide new virions. The protein is Capsid protein of Homo sapiens (Human).